The chain runs to 901 residues: Aconitate hydratase A (901 aa).

The [4Fe-4S] cluster site is built by Cys-443, Cys-509, and Cys-512.

This sequence belongs to the aconitase/IPM isomerase family. Monomer. [4Fe-4S] cluster is required as a cofactor.

The enzyme catalyses citrate = D-threo-isocitrate. It catalyses the reaction (2S,3R)-3-hydroxybutane-1,2,3-tricarboxylate = 2-methyl-cis-aconitate + H2O. Its pathway is carbohydrate metabolism; tricarboxylic acid cycle; isocitrate from oxaloacetate: step 2/2. The protein operates within organic acid metabolism; propanoate degradation. In terms of biological role, involved in the catabolism of short chain fatty acids (SCFA) via the tricarboxylic acid (TCA)(acetyl degradation route) and probably the 2-methylcitrate cycle I (propionate degradation route). Catalyzes the reversible isomerization of citrate to isocitrate via cis-aconitate. Could catalyze the hydration of 2-methyl-cis-aconitate to yield (2R,3S)-2-methylisocitrate. The apo form of AcnA functions as a RNA-binding regulatory protein. This Staphylococcus epidermidis (strain ATCC 12228 / FDA PCI 1200) protein is Aconitate hydratase A (acnA).